Consider the following 659-residue polypeptide: UvrABC system protein B (659 aa).

One can recognise a Helicase ATP-binding domain in the interval Gln-25–Arg-182. Gly-38–Thr-45 is an ATP binding site. The short motif at Tyr-91–Ile-114 is the Beta-hairpin element. The region spanning Gln-429–Ile-582 is the Helicase C-terminal domain. Residues Glu-622–Asn-657 enclose the UVR domain.

It belongs to the UvrB family. As to quaternary structure, forms a heterotetramer with UvrA during the search for lesions. Interacts with UvrC in an incision complex.

It localises to the cytoplasm. Functionally, the UvrABC repair system catalyzes the recognition and processing of DNA lesions. A damage recognition complex composed of 2 UvrA and 2 UvrB subunits scans DNA for abnormalities. Upon binding of the UvrA(2)B(2) complex to a putative damaged site, the DNA wraps around one UvrB monomer. DNA wrap is dependent on ATP binding by UvrB and probably causes local melting of the DNA helix, facilitating insertion of UvrB beta-hairpin between the DNA strands. Then UvrB probes one DNA strand for the presence of a lesion. If a lesion is found the UvrA subunits dissociate and the UvrB-DNA preincision complex is formed. This complex is subsequently bound by UvrC and the second UvrB is released. If no lesion is found, the DNA wraps around the other UvrB subunit that will check the other stand for damage. This is UvrABC system protein B from Clostridium perfringens (strain SM101 / Type A).